Consider the following 325-residue polypeptide: Endo-1,4-beta-xylanase 2 (325 aa).

The signal sequence occupies residues 1–18 (MLYTSIFAAAMAASGAMA). Residues 26 to 325 (ASNCTTLDSF…KAAVKAIMAI (300 aa)) form the GH10 domain. A glycan (N-linked (GlcNAc...) asparagine) is linked at Asn-28. The active-site Proton donor is Glu-157. Glu-262 serves as the catalytic Nucleophile. A disulfide bridge connects residues Cys-280 and Cys-286.

It belongs to the glycosyl hydrolase 10 (cellulase F) family.

It is found in the secreted. It catalyses the reaction Endohydrolysis of (1-&gt;4)-beta-D-xylosidic linkages in xylans.. The protein operates within glycan degradation; xylan degradation. Endo-1,4-beta-xylanase involved in the hydrolysis of xylan, a major structural heterogeneous polysaccharide found in plant biomass representing the second most abundant polysaccharide in the biosphere, after cellulose. In Claviceps purpurea (Ergot fungus), this protein is Endo-1,4-beta-xylanase 2 (xyl2).